A 319-amino-acid polypeptide reads, in one-letter code: NADH-quinone oxidoreductase subunit H 1 (319 aa).

8 consecutive transmembrane segments (helical) span residues 8-28 (LFNI…LIWI), 74-94 (LVFI…FAVI), 107-127 (IGLL…VLGG), 147-167 (LSYE…AGTF), 179-199 (MWFC…GIAE), 230-250 (FFVG…TLFF), 258-278 (LPPL…FILL), and 297-317 (LMLP…LALD).

This sequence belongs to the complex I subunit 1 family. As to quaternary structure, NDH-1 is composed of 14 different subunits. Subunits NuoA, H, J, K, L, M, N constitute the membrane sector of the complex.

Its subcellular location is the cell inner membrane. The catalysed reaction is a quinone + NADH + 5 H(+)(in) = a quinol + NAD(+) + 4 H(+)(out). Functionally, NDH-1 shuttles electrons from NADH, via FMN and iron-sulfur (Fe-S) centers, to quinones in the respiratory chain. The immediate electron acceptor for the enzyme in this species is believed to be ubiquinone. Couples the redox reaction to proton translocation (for every two electrons transferred, four hydrogen ions are translocated across the cytoplasmic membrane), and thus conserves the redox energy in a proton gradient. This subunit may bind ubiquinone. This is NADH-quinone oxidoreductase subunit H 1 from Nitrosococcus oceani (strain ATCC 19707 / BCRC 17464 / JCM 30415 / NCIMB 11848 / C-107).